Reading from the N-terminus, the 313-residue chain is Transaldolase (313 aa).

K125 functions as the Schiff-base intermediate with substrate in the catalytic mechanism.

It belongs to the transaldolase family. Type 1 subfamily. Homodimer.

The protein localises to the cytoplasm. It carries out the reaction D-sedoheptulose 7-phosphate + D-glyceraldehyde 3-phosphate = D-erythrose 4-phosphate + beta-D-fructose 6-phosphate. It functions in the pathway carbohydrate degradation; pentose phosphate pathway; D-glyceraldehyde 3-phosphate and beta-D-fructose 6-phosphate from D-ribose 5-phosphate and D-xylulose 5-phosphate (non-oxidative stage): step 2/3. Transaldolase is important for the balance of metabolites in the pentose-phosphate pathway. The chain is Transaldolase from Pseudomonas syringae pv. syringae (strain B728a).